Consider the following 181-residue polypeptide: ADP-ribosylation factor 1 (181 aa).

Gly2 is lipidated: N-myristoyl glycine. GTP-binding positions include Gly24–Thr31, Asp67–Gln71, and Asn126–Asp129.

The protein belongs to the small GTPase superfamily. Arf family.

The protein resides in the golgi apparatus. It catalyses the reaction GTP + H2O = GDP + phosphate + H(+). Its function is as follows. GTP-binding protein involved in protein trafficking; may modulate vesicle budding and uncoating within the Golgi apparatus. The chain is ADP-ribosylation factor 1 (ARF1) from Chlamydomonas reinhardtii (Chlamydomonas smithii).